The chain runs to 308 residues: D-alanine--D-alanine ligase (308 aa).

Residues 102–302 (KHVAKAAGIP…FGEFLRWMVE (201 aa)) form the ATP-grasp domain. Residue 128 to 183 (PMKPPYVVKPVREGSSFGVVIVKEDQSHPPQVITSSDWRYGDRIMVERYVAGREFT) coordinates ATP. The Mg(2+) site is built by Asp252, Glu269, and Asn271.

The protein belongs to the D-alanine--D-alanine ligase family. Mg(2+) is required as a cofactor. Requires Mn(2+) as cofactor.

It localises to the cytoplasm. It catalyses the reaction 2 D-alanine + ATP = D-alanyl-D-alanine + ADP + phosphate + H(+). Its pathway is cell wall biogenesis; peptidoglycan biosynthesis. Cell wall formation. This chain is D-alanine--D-alanine ligase, found in Sinorhizobium medicae (strain WSM419) (Ensifer medicae).